Consider the following 409-residue polypeptide: MQIFLVGGAVRDQLLQLKVKDRDYVVIAATPDKLLKLGFQQVGKDFPVFIHPQTGDEYALARTERKKGSGHNGFECYAGLDVTLTEDLKRRDLTINAIAQSPQGELIDPYHGLQDIQTKTLRHISTAFSEDPLRVLRVARFAARFYDLGFKIAPETLDLMRSLSSSGELNHLTAERVWQETANALKTNNPQIYFQVLRDCGALPLLFPEIEALFGVPAPKKWHPEIDTGIHTLMVVEQSVKLSDSLAFRFACLVHDLGKALTPKELWPSHKGHGKLGLQLINNLCERLKIPNECRELACLVSEHHTLIHKGLELEADSLITLMDQNDAWRKPERFSQMLQCCVADSKGRTGFEEKDYPSADYIWRAFQVAQLVDVQPIIKQGYQGAEIKAQLKHARIRSVEQYKQKHSV.

Residues glycine 8 and arginine 11 each coordinate ATP. CTP-binding residues include glycine 8 and arginine 11. Positions 21 and 23 each coordinate Mg(2+). The ATP site is built by arginine 91, arginine 137, and arginine 140. CTP is bound by residues arginine 91, arginine 137, and arginine 140. The HD domain maps to 228 to 329 (TGIHTLMVVE…ITLMDQNDAW (102 aa)).

Belongs to the tRNA nucleotidyltransferase/poly(A) polymerase family. Bacterial CCA-adding enzyme type 1 subfamily. Monomer. Can also form homodimers and oligomers. Mg(2+) is required as a cofactor. It depends on Ni(2+) as a cofactor.

The catalysed reaction is a tRNA precursor + 2 CTP + ATP = a tRNA with a 3' CCA end + 3 diphosphate. It carries out the reaction a tRNA with a 3' CCA end + 2 CTP + ATP = a tRNA with a 3' CCACCA end + 3 diphosphate. Functionally, catalyzes the addition and repair of the essential 3'-terminal CCA sequence in tRNAs without using a nucleic acid template. Adds these three nucleotides in the order of C, C, and A to the tRNA nucleotide-73, using CTP and ATP as substrates and producing inorganic pyrophosphate. tRNA 3'-terminal CCA addition is required both for tRNA processing and repair. Also involved in tRNA surveillance by mediating tandem CCA addition to generate a CCACCA at the 3' terminus of unstable tRNAs. While stable tRNAs receive only 3'-terminal CCA, unstable tRNAs are marked with CCACCA and rapidly degraded. The sequence is that of Multifunctional CCA protein from Psychromonas ingrahamii (strain DSM 17664 / CCUG 51855 / 37).